Reading from the N-terminus, the 127-residue chain is Protein pkiA (127 aa).

Residues 16-127 form the HIT domain; that stretch reads IFAKIISGAI…GGRQMNWPPG (112 aa).

The protein is Protein pkiA (pkiA) of Dictyostelium discoideum (Social amoeba).